Here is a 560-residue protein sequence, read N- to C-terminus: Dihydroxy-acid dehydratase (560 aa).

Cys50 contacts [2Fe-2S] cluster. Mg(2+) is bound at residue Asp82. Residue Cys123 participates in [2Fe-2S] cluster binding. Residues Asp124 and Lys125 each coordinate Mg(2+). Lys125 bears the N6-carboxylysine mark. Cys195 contributes to the [2Fe-2S] cluster binding site. Mg(2+) is bound at residue Glu446. Ser472 (proton acceptor) is an active-site residue.

This sequence belongs to the IlvD/Edd family. In terms of assembly, homodimer. The cofactor is [2Fe-2S] cluster. Mg(2+) is required as a cofactor.

The catalysed reaction is (2R)-2,3-dihydroxy-3-methylbutanoate = 3-methyl-2-oxobutanoate + H2O. The enzyme catalyses (2R,3R)-2,3-dihydroxy-3-methylpentanoate = (S)-3-methyl-2-oxopentanoate + H2O. Its pathway is amino-acid biosynthesis; L-isoleucine biosynthesis; L-isoleucine from 2-oxobutanoate: step 3/4. The protein operates within amino-acid biosynthesis; L-valine biosynthesis; L-valine from pyruvate: step 3/4. Functionally, functions in the biosynthesis of branched-chain amino acids. Catalyzes the dehydration of (2R,3R)-2,3-dihydroxy-3-methylpentanoate (2,3-dihydroxy-3-methylvalerate) into 2-oxo-3-methylpentanoate (2-oxo-3-methylvalerate) and of (2R)-2,3-dihydroxy-3-methylbutanoate (2,3-dihydroxyisovalerate) into 2-oxo-3-methylbutanoate (2-oxoisovalerate), the penultimate precursor to L-isoleucine and L-valine, respectively. In Leptothrix cholodnii (strain ATCC 51168 / LMG 8142 / SP-6) (Leptothrix discophora (strain SP-6)), this protein is Dihydroxy-acid dehydratase.